We begin with the raw amino-acid sequence, 513 residues long: Light-independent protochlorophyllide reductase subunit B (513 aa).

Position 36 (Asp-36) interacts with [4Fe-4S] cluster. The active-site Proton donor is the Asp-274. Residue 409–410 (GL) coordinates substrate. The disordered stretch occupies residues 426–457 (DAAGPSHHGGHSPKPQAAEPAPQAAPQPENTG). A compositionally biased stretch (low complexity) spans 440–454 (PQAAEPAPQAAPQPE).

It belongs to the ChlB/BchB/BchZ family. As to quaternary structure, protochlorophyllide reductase is composed of three subunits; BchL, BchN and BchB. Forms a heterotetramer of two BchB and two BchN subunits. [4Fe-4S] cluster is required as a cofactor.

It catalyses the reaction chlorophyllide a + oxidized 2[4Fe-4S]-[ferredoxin] + 2 ADP + 2 phosphate = protochlorophyllide a + reduced 2[4Fe-4S]-[ferredoxin] + 2 ATP + 2 H2O. Its pathway is porphyrin-containing compound metabolism; bacteriochlorophyll biosynthesis (light-independent). In terms of biological role, component of the dark-operative protochlorophyllide reductase (DPOR) that uses Mg-ATP and reduced ferredoxin to reduce ring D of protochlorophyllide (Pchlide) to form chlorophyllide a (Chlide). This reaction is light-independent. The NB-protein (BchN-BchB) is the catalytic component of the complex. This Roseobacter denitrificans (strain ATCC 33942 / OCh 114) (Erythrobacter sp. (strain OCh 114)) protein is Light-independent protochlorophyllide reductase subunit B.